The sequence spans 45 residues: Large ribosomal subunit protein bL36 (45 aa).

Positions 1-45 are disordered; it reads MRVSSSIKADPSKGDKLVRRKGRLYVINKKDPNRKQRQAGPARKK.

Belongs to the bacterial ribosomal protein bL36 family.

This is Large ribosomal subunit protein bL36 from Chlamydia trachomatis serovar L2 (strain ATCC VR-902B / DSM 19102 / 434/Bu).